The chain runs to 572 residues: Sulfite reductase [NADPH] hemoprotein beta-component (572 aa).

4 residues coordinate [4Fe-4S] cluster: Cys-436, Cys-442, Cys-481, and Cys-485. Cys-485 serves as a coordination point for siroheme.

The protein belongs to the nitrite and sulfite reductase 4Fe-4S domain family. Alpha(8)-beta(8). The alpha component is a flavoprotein, the beta component is a hemoprotein. The cofactor is siroheme. [4Fe-4S] cluster serves as cofactor.

The enzyme catalyses hydrogen sulfide + 3 NADP(+) + 3 H2O = sulfite + 3 NADPH + 4 H(+). Its pathway is sulfur metabolism; hydrogen sulfide biosynthesis; hydrogen sulfide from sulfite (NADPH route): step 1/1. Component of the sulfite reductase complex that catalyzes the 6-electron reduction of sulfite to sulfide. This is one of several activities required for the biosynthesis of L-cysteine from sulfate. This chain is Sulfite reductase [NADPH] hemoprotein beta-component, found in Bacillus pumilus (strain SAFR-032).